The sequence spans 185 residues: Ribosome-recycling factor (185 aa).

The protein belongs to the RRF family.

It is found in the cytoplasm. In terms of biological role, responsible for the release of ribosomes from messenger RNA at the termination of protein biosynthesis. May increase the efficiency of translation by recycling ribosomes from one round of translation to another. The polypeptide is Ribosome-recycling factor (Yersinia pseudotuberculosis serotype O:1b (strain IP 31758)).